Consider the following 396-residue polypeptide: MSQVLLGTQSFELERFPPQENSNTLQAWEAADEYLLQNIDLNQIDGRPVLVFNDQFGTLTCALHAYRPFSVSDSYMSQLATAHNLRLNHLDEDVVTLLSSMDALPEAPKLVVIKIPKALALLEHQLRALRRVVAPDTVIIAGAKSRDVHNSTLQLFEKILGPTKTTLAWKKARLIHCEVADIPLAEEAPETVDWPLANTEYVIHNHANVFSRNNLDIGARFFMEILPYDVEGKIADLGCGNGVVGLIALEQNPLAEMLFVDESYMAVASSELNITYNRPQDLSRCEFMVSHGLAGVERESLQLVLCNPPFHQQHAVSDHVAWQMFCDAKRCLKVGGELMIVGNRHLDYFHKLKRLFGNCETLDSNQKFMVLKAVKTASSRSEGGGSGSLDMSYSDF.

Belongs to the methyltransferase superfamily. RlmG family.

Its subcellular location is the cytoplasm. It catalyses the reaction guanosine(1835) in 23S rRNA + S-adenosyl-L-methionine = N(2)-methylguanosine(1835) in 23S rRNA + S-adenosyl-L-homocysteine + H(+). Its function is as follows. Specifically methylates the guanine in position 1835 (m2G1835) of 23S rRNA. In Yersinia enterocolitica serotype O:8 / biotype 1B (strain NCTC 13174 / 8081), this protein is Ribosomal RNA large subunit methyltransferase G.